Consider the following 513-residue polypeptide: Serine/threonine protein phosphatase 2A 55 kDa regulatory subunit B alpha isoform (513 aa).

The residue at position 1 (M1) is an N-acetylmethionine. WD repeat units lie at residues 36–75, 112–153, 232–270, 281–321, 340–378, and 483–513; these read QEVD…NSSG, EIEE…IKKI, AHDY…QSFN, DLSE…LCDS, EIIA…GPVA, and DYTT…MYYA.

Belongs to the phosphatase 2A regulatory subunit B family. In terms of assembly, PP2A consists of a common heteromeric enzyme, composed of a catalytic subunit (subunits C), a constant regulatory subunit (subunit A), and a variety of regulatory subunits such as subunits B (the R2/B/PR55/B55, R3/B''/PR72/PR130/PR59 and R5/B'/B56 families). Interacts with SIC/RON3. In terms of tissue distribution, expressed ubiquitously.

In terms of biological role, the B regulatory subunit may modulate substrate selectivity and catalytic activity, and may also direct the localization of the catalytic enzyme to a particular subcellular compartment. This is Serine/threonine protein phosphatase 2A 55 kDa regulatory subunit B alpha isoform (PP2AB1) from Arabidopsis thaliana (Mouse-ear cress).